The chain runs to 65 residues: Large ribosomal subunit protein bL35 (65 aa).

The protein belongs to the bacterial ribosomal protein bL35 family.

The polypeptide is Large ribosomal subunit protein bL35 (Sodalis glossinidius (strain morsitans)).